Here is a 351-residue protein sequence, read N- to C-terminus: E3 ubiquitin-protein ligase TRIM63 (351 aa).

An RING-type zinc finger spans residues 23–79 (CPICLEMFTKPVVILPCQHNLCRKCANDIFQAANPYWTNRGGSVSMSGGRFRCPSCR). Residues 74–218 (RCPSCRHEVI…LSHKFDALYA (145 aa)) are interaction with TTN. Residues 117 to 159 (GSHPMCKEHEDEKINIYCLTCEVPTCSLCKVFGAHQACEVAPL) form a B box-type zinc finger. Zn(2+) is bound by residues C122, H125, C145, and H151. Positions 189–269 (SQLEDSCRVT…VETAIQSLDE (81 aa)) form a coiled coil. Residues 267–325 (LDEPGGATFLLSAKPLIKSIVEASKGCQLGKTEQGFENMDYFTLNLEHIAEALRAIDFG) enclose the COS domain. A compositionally biased stretch (acidic residues) spans 326–345 (TDEEEEFTEEEEEEDQEEGV). The tract at residues 326–351 (TDEEEEFTEEEEEEDQEEGVSTEGHQ) is disordered.

As to quaternary structure, homodimer. Homooligomer and heterooligomer. Interacts with SUMO2, titin/TTN and GMEB1. Interacts with TRIM54 and probably with TRIM55 and TNNI3. Forms a ternary complex with RACK1 and PRKCE. Interacts with CKM. In terms of tissue distribution, muscle specific. Selectively expressed in heart and skeletal muscle.

The protein localises to the cytoplasm. The protein resides in the nucleus. It localises to the myofibril. Its subcellular location is the sarcomere. It is found in the m line. The protein localises to the z line. It catalyses the reaction S-ubiquitinyl-[E2 ubiquitin-conjugating enzyme]-L-cysteine + [acceptor protein]-L-lysine = [E2 ubiquitin-conjugating enzyme]-L-cysteine + N(6)-ubiquitinyl-[acceptor protein]-L-lysine.. Its pathway is protein modification; protein ubiquitination. In terms of biological role, E3 ubiquitin ligase. Mediates the ubiquitination and subsequent proteasomal degradation of CKM, GMEB1 and HIBADH. Regulates the proteasomal degradation of muscle proteins under amino acid starvation, where muscle protein is catabolized to provide other organs with amino acids. Inhibits de novo skeletal muscle protein synthesis under amino acid starvation. Regulates proteasomal degradation of cardiac troponin I/TNNI3 and probably of other sarcomeric-associated proteins. May play a role in striated muscle atrophy and hypertrophy by regulating an anti-hypertrophic PKC-mediated signaling pathway. May regulate the organization of myofibrils through TTN in muscle cells. The chain is E3 ubiquitin-protein ligase TRIM63 (Trim63) from Rattus norvegicus (Rat).